Consider the following 396-residue polypeptide: MKILVLNSGSSSIKFKFFDNKVVKASGLVEKIGEQNSKVVLKNTLNNESFERELTINNHEEGLSIVNELFKESGILADLNALDGCGHRIVHGGRNLSEHCLVDDYVLKEIDRVSIFAPLHNPAHLAGIKTMIKAAPSVANAAIFDTAFHRTMPDFAYMYALPYDFYDKHNIRRYGFHGTSHAYVSSRAAKFLQKDQNELNVISAHLGNGASVCAIEKGKSVDTSMGFTPLEGLVMGTRCGDLDPAILPFISHLKGLTIEEIDTLMNKKSGVYGICGYNDFRDIEREIEQGNDKARLALDMFCYRLVKYIGSYFAVLPKTDAIIFTGGIGENDSLVRQKVCERLAHLGIELDFELNKQRISGERMINHANSKVKVLVIPTDEELEIARITEELIGKN.

Position 7 (N7) interacts with Mg(2+). Residue K14 participates in ATP binding. Residue R88 participates in substrate binding. The active-site Proton donor/acceptor is D145. ATP-binding positions include H205–G209, D279–R281, and G327–N331. E381 contacts Mg(2+).

It belongs to the acetokinase family. In terms of assembly, homodimer. Mg(2+) serves as cofactor. Requires Mn(2+) as cofactor.

The protein resides in the cytoplasm. The enzyme catalyses acetate + ATP = acetyl phosphate + ADP. The protein operates within metabolic intermediate biosynthesis; acetyl-CoA biosynthesis; acetyl-CoA from acetate: step 1/2. Its function is as follows. Catalyzes the formation of acetyl phosphate from acetate and ATP. Can also catalyze the reverse reaction. The polypeptide is Acetate kinase (Campylobacter jejuni subsp. jejuni serotype O:2 (strain ATCC 700819 / NCTC 11168)).